The following is a 293-amino-acid chain: Methylsterol monooxygenase 1 (293 aa).

2 helical membrane passes run L55–I75 and G100–T120. Positions G144–T274 constitute a Fatty acid hydroxylase domain. Positions H157–H161 match the Histidine box-1 motif. Residues H170–H174 carry the Histidine box-2 motif. A helical membrane pass occupies residues F199–M219. Positions H249–M255 match the Histidine box-3 motif.

Belongs to the sterol desaturase family. Fe cation is required as a cofactor. In terms of processing, ubiquitinated by MARCHF6, leading to proteasomal degradation.

It localises to the endoplasmic reticulum membrane. The catalysed reaction is 4,4-dimethyl-5alpha-cholest-7-en-3beta-ol + 6 Fe(II)-[cytochrome b5] + 3 O2 + 5 H(+) = 4alpha-carboxy-4beta-methyl-5alpha-cholest-7-ene-3beta-ol + 6 Fe(III)-[cytochrome b5] + 4 H2O. It carries out the reaction 4,4-dimethyl-5alpha-cholesta-8,24-dien-3beta-ol + 6 Fe(II)-[cytochrome b5] + 3 O2 + 5 H(+) = 4beta-methylzymosterol-4alpha-carboxylate + 6 Fe(III)-[cytochrome b5] + 4 H2O. It catalyses the reaction 4alpha-methylzymosterol + 6 Fe(II)-[cytochrome b5] + 3 O2 + 5 H(+) = 4alpha-carboxyzymosterol + 6 Fe(III)-[cytochrome b5] + 4 H2O. The enzyme catalyses 4alpha-methyl-5alpha-cholest-7-en-3beta-ol + 6 Fe(II)-[cytochrome b5] + 3 O2 + 5 H(+) = 4alpha-carboxy-5alpha-cholest-7-en-3beta-ol + 6 Fe(III)-[cytochrome b5] + 4 H2O. The catalysed reaction is 4,4-dimethyl-5alpha-cholest-8-en-3beta-ol + 6 Fe(II)-[cytochrome b5] + 3 O2 + 5 H(+) = 4alpha-carboxy-4beta-methyl-5alpha-cholest-8-en-3beta-ol + 6 Fe(III)-[cytochrome b5] + 4 H2O. It carries out the reaction 4alpha-methyl-5alpha-cholest-8-en-3beta-ol + 6 Fe(II)-[cytochrome b5] + 3 O2 + 5 H(+) = 4alpha-carboxy-5alpha-cholest-8-ene-3beta-ol + 6 Fe(III)-[cytochrome b5] + 4 H2O. It participates in steroid biosynthesis; zymosterol biosynthesis; zymosterol from lanosterol: step 3/6. The protein operates within steroid biosynthesis; cholesterol biosynthesis. In terms of biological role, catalyzes the three-step monooxygenation required for the demethylation of 4,4-dimethyl and 4alpha-methylsterols, which can be subsequently metabolized to cholesterol. The chain is Methylsterol monooxygenase 1 (Msmo1) from Rattus norvegicus (Rat).